The following is a 546-amino-acid chain: Cryptochrome DASH, chloroplastic/mitochondrial (546 aa).

The region spanning 4–151 is the Photolyase/cryptochrome alpha/beta domain; that stretch reads TRVVIWFRND…TMERHWGSTL (148 aa). Positions 497 to 546 are disordered; the sequence is PRRDFTEMGSPPGPRRGGGGGGRGRGRPGGSTPNRGTKARVASVYDTVYG. Over residues 511–525 the composition is skewed to gly residues; the sequence is RRGGGGGGRGRGRPG.

It belongs to the DNA photolyase class-1 family. FAD serves as cofactor. The cofactor is (6R)-5,10-methylene-5,6,7,8-tetrahydrofolate.

The protein localises to the plastid. It is found in the chloroplast. It localises to the mitochondrion. Functionally, may have a photoreceptor function. Binds ss- and ds-DNA in a sequence non-specific manner, lacks photolyase activity. In Ostreococcus tauri, this protein is Cryptochrome DASH, chloroplastic/mitochondrial.